The following is a 3412-amino-acid chain: Genome polyprotein (3412 aa).

Residues 1 to 104 (MSGRKAQGKT…LSSRKRRSNE (104 aa)) are Cytoplasmic-facing. The tract at residues 38-72 (PGPSRGVQGFIFFFLFNILTGKKLTTHLKRLWRML) is hydrophobic; homodimerization of capsid protein C. Positions 102-121 (SNEMAMMPLLILSMVILAGG) are cleaved as a propeptide — ER anchor for the capsid protein C, removed in mature form by serine protease NS3. The chain crosses the membrane as a helical span at residues 105–125 (MAMMPLLILSMVILAGGVTLV). The Extracellular portion of the chain corresponds to 126–244 (RKNRWLLLNV…GERQLQKIER (119 aa)). Residues Asn134 and Asn150 are each glycosylated (N-linked (GlcNAc...) asparagine; by host). Residues 245-265 (WLVRNPFFAITALAIAYLVGN) form a helical membrane-spanning segment. Over 266–270 (NMTQR) the chain is Cytoplasmic. A helical transmembrane segment spans residues 271-285 (VVIALLVLAVGPAYS). Residues 286 to 730 (AHCIGITDRD…TVFGSAFQGL (445 aa)) lie on the Extracellular side of the membrane. 8 disulfide bridges follow: Cys288–Cys315, Cys345–Cys401, Cys345–Cys406, Cys359–Cys390, Cys377–Cys401, Cys377–Cys406, Cys467–Cys568, and Cys585–Cys615. Residues 383 to 396 (DRGWGNGCGLFGKG) are fusion peptide. The helical transmembrane segment at 731–751 (FGGLSWITKVIMGAVLIWVGI) threads the bilayer. Topologically, residues 752–757 (NTRNMT) are extracellular. Residues 758–778 (MSMSMILVGVIMMFLSLGVGA) traverse the membrane as a helical segment. Topologically, residues 779–1132 (DQGCAVNFGK…LVRSWVTAGE (354 aa)) are extracellular. 6 disulfides stabilise this stretch: Cys782–Cys793, Cys833–Cys921, Cys957–Cys1002, Cys1058–Cys1107, Cys1069–Cys1091, and Cys1090–Cys1094. Asn908 and Asn986 each carry an N-linked (GlcNAc...) asparagine; by host glycan. Residues 1133 to 1153 (VHAVPFGLVSMMIAMEVVLRK) form a helical membrane-spanning segment. Over 1154–1201 (RQGPKQMLVGGIILLGAMLVGQVTVLDLVKLIVAVGLHFHEINNGGDA) the chain is Cytoplasmic. The helical transmembrane segment at 1202 to 1222 (MYMALIASFSIRPGLLVGFGL) threads the bilayer. Residues 1223-1287 (RTLWSPRERL…VLPLMALLTP (65 aa)) lie on the Lumenal side of the membrane. The helical transmembrane segment at 1288-1308 (VTMHEVRMATMLFCTVVIVGV) threads the bilayer. Over 1309-1355 (LHQNAKDTSMQKTIPIVALTLTSYMGLTQPFLGLCAYMSTQVFGRRS) the chain is Cytoplasmic. Residues 1356 to 1376 (IPVNEALAAAGLVGVLAGLAF) form a helical membrane-spanning segment. Topologically, residues 1377–1378 (QD) are lumenal. Residues 1379–1399 (MENFLGPIAVGGILMMLVSVA) traverse the membrane as a helical segment. Topologically, residues 1400–1456 (GKVDGLELKKLGEVSWEEEAEISGSSSRYDVALSEQGEFKLLSEDKVPWDQIVMTSL) are cytoplasmic. Positions 1407-1446 (LKKLGEVSWEEEAEISGSSSRYDVALSEQGEFKLLSEDKV) are interacts with and activates NS3 protease. Positions 1457–1477 (ALVGAAIHPFALLLVLGGWVL) form an intramembrane region, helical. Topologically, residues 1478–2157 (HIKGARRSGD…RNALSMMPEA (680 aa)) are cytoplasmic. The region spanning 1485–1665 (SGDVLWDIPT…EVKEESKEEL (181 aa)) is the Peptidase S7 domain. Active-site charge relay system; for serine protease NS3 activity residues include His1537, Asp1561, and Ser1622. The Helicase ATP-binding domain maps to 1669–1825 (PTMLKKGMTT…HSNGEIEDVQ (157 aa)). An important for RNA-binding region spans residues 1673–1676 (KKGM). An ATP-binding site is contributed by 1682–1689 (FHPGAGKT). A DEAH box motif is present at residues 1773–1776 (DEAH). Positions 1820 to 1997 (EIEDVQTDIP…VRGGMVAPLY (178 aa)) constitute a Helicase C-terminal domain. N6-acetyllysine; by host is present on Lys1877. The segment at 1942–1961 (AAQRRGRIGRNPNRDGDSYY) is disordered. Residues 2158 to 2178 (MTIVMLFILAGLLTSGMVIFF) form a helical membrane-spanning segment. At 2179 to 2186 (MSPKGMSR) the chain is on the lumenal side. The helical intramembrane region spans 2187 to 2207 (MSMAMGTMAGSGYLMFLGGVK). Residues 2208–2209 (PT) lie on the Lumenal side of the membrane. The chain crosses the membrane as a helical span at residues 2210–2230 (HISYVMLIFFVLMVVIIPEPG). Residues 2231-2241 (QQRTIQDNQVA) lie on the Cytoplasmic side of the membrane. The helical transmembrane segment at 2242–2262 (YLIIGILTLLSIVAANELGML) threads the bilayer. The Lumenal segment spans residues 2263–2293 (EKTKEDFFGRRNIATSGGTIPWSWPDLDLKP). The segment at residues 2294–2314 (GAAWTVYVGIVTMLSPMLHHW) is an intramembrane region (helical). Residues 2315–2360 (IKVEYGNLSLSGIAQSASVLSFMDKGIPFMKMNISVVILLVSGWNS) lie on the Lumenal side of the membrane. Residues 2361-2380 (ITVIPLLCGVGGAMLHWTLI) traverse the membrane as a helical segment. Residues 2381–2421 (LPGIKAQQSKLAQKRVFHGVAKNPVVDGNPTADIEEAPEMP) lie on the Cytoplasmic side of the membrane. Residues 2422–2442 (ALYEKKLALYLLLALSLMSVA) traverse the membrane as a helical segment. The Lumenal segment spans residues 2443–2445 (MCR). The helical transmembrane segment at 2446–2466 (TPFSLAEGIVLSSAALGPLIE) threads the bilayer. Over 2467 to 3411 (GNTSLLWNGP…VDADLQPGEL (945 aa)) the chain is Cytoplasmic. Positions 2508 to 2772 (GSASGKTLGE…DVILPIGTRS (265 aa)) constitute an mRNA cap 0-1 NS5-type MT domain. An S-adenosyl-L-methionine-binding site is contributed by Ser2563. Ser2563 is modified (phosphoserine). Lys2568 acts as the For 2'-O-MTase activity in catalysis. S-adenosyl-L-methionine-binding residues include Gly2593, Trp2594, Thr2611, Leu2612, Asp2638, and Ile2639. Asp2653 serves as the catalytic For 2'-O-MTase activity. Residue Ile2654 participates in S-adenosyl-L-methionine binding. Catalysis depends on for 2'-O-MTase activity residues Lys2689 and Glu2725. Tyr2727 is a binding site for S-adenosyl-L-methionine. Residues 2879–2912 (RKIMKVVNRWLFRHLAREKNPRLCTKEEFIAKVR) carry the Nuclear localization signal motif. 4 residues coordinate Zn(2+): Glu2946, His2950, Cys2955, and Cys2958. The 153-residue stretch at 3036-3188 (GGFYADDTAG…RPVDDRFGLA (153 aa)) folds into the RdRp catalytic domain. Zn(2+) is bound by residues His3223, Cys3239, and Cys3358.

In the N-terminal section; belongs to the class I-like SAM-binding methyltransferase superfamily. mRNA cap 0-1 NS5-type methyltransferase family. Homodimer. Interacts (via N-terminus) with host EXOC1 (via C-terminus); this interaction results in EXOC1 degradation through the proteasome degradation pathway. In terms of assembly, forms heterodimers with envelope protein E in the endoplasmic reticulum and Golgi. As to quaternary structure, homodimer; in the endoplasmic reticulum and Golgi. Interacts with protein prM. Interacts with non-structural protein 1. Homodimer; Homohexamer when secreted. Interacts with envelope protein E. In terms of assembly, interacts (via N-terminus) with serine protease NS3. As to quaternary structure, forms a heterodimer with serine protease NS3. May form homooligomers. Forms a heterodimer with NS2B. Interacts with non-structural protein 2A (via N-terminus). Interacts with NS4B. Interacts with unphosphorylated RNA-directed RNA polymerase NS5; this interaction stimulates RNA-directed RNA polymerase NS5 guanylyltransferase activity. NS3 interacts with host PDCD6IP; this interaction contributes to virion release. In terms of assembly, interacts with serine protease NS3. As to quaternary structure, homodimer. Interacts with host STAT2; this interaction prevents the establishment of cellular antiviral state. Interacts with serine protease NS3. Interacts with host TRIM23; this interaction leads to NS5 ubiquitination. Specific enzymatic cleavages in vivo yield mature proteins. The nascent capsid protein C contains a C-terminal hydrophobic domain that act as a signal sequence for translocation of prM into the lumen of the ER. Mature capsid protein C is cleaved at a site upstream of this hydrophobic domain by NS3. prM is cleaved in post-Golgi vesicles by a host furin, releasing the mature small envelope protein M, and peptide pr. Non-structural protein 2A-alpha, a C-terminally truncated form of non-structural protein 2A, results from partial cleavage by NS3. Specific enzymatic cleavages in vivo yield mature proteins peptide 2K acts as a signal sequence and is removed from the N-terminus of NS4B by the host signal peptidase in the ER lumen. Signal cleavage at the 2K-4B site requires a prior NS3 protease-mediated cleavage at the 4A-2K site. In terms of processing, cleaved in post-Golgi vesicles by a host furin, releasing the mature small envelope protein M, and peptide pr. This cleavage is incomplete as up to 30% of viral particles still carry uncleaved prM. Post-translationally, N-glycosylated. N-glycosylated. The excreted form is glycosylated and this is required for efficient secretion of the protein from infected cells. In terms of processing, polyubiquitinated; ubiquitination is probably mediated by host TRIM23 and is prerequisite for NS5-STAT2 interaction. NS5 is not ISGylated or sumoylated. Post-translationally, acetylated by host KAT5. Acetylation modulates NS3 RNA-binding and unwinding activities and plays an important positive role for viral replication. Phosphorylated on serines residues. This phosphorylation may trigger NS5 nuclear localization.

The protein resides in the virion. Its subcellular location is the host nucleus. It localises to the host cytoplasm. The protein localises to the host perinuclear region. It is found in the secreted. The protein resides in the virion membrane. Its subcellular location is the host endoplasmic reticulum membrane. It catalyses the reaction Selective hydrolysis of -Xaa-Xaa-|-Yaa- bonds in which each of the Xaa can be either Arg or Lys and Yaa can be either Ser or Ala.. It carries out the reaction RNA(n) + a ribonucleoside 5'-triphosphate = RNA(n+1) + diphosphate. The catalysed reaction is a ribonucleoside 5'-triphosphate + H2O = a ribonucleoside 5'-diphosphate + phosphate + H(+). The enzyme catalyses ATP + H2O = ADP + phosphate + H(+). It catalyses the reaction a 5'-end (5'-triphosphoguanosine)-ribonucleoside in mRNA + S-adenosyl-L-methionine = a 5'-end (N(7)-methyl 5'-triphosphoguanosine)-ribonucleoside in mRNA + S-adenosyl-L-homocysteine. It carries out the reaction a 5'-end (N(7)-methyl 5'-triphosphoguanosine)-ribonucleoside in mRNA + S-adenosyl-L-methionine = a 5'-end (N(7)-methyl 5'-triphosphoguanosine)-(2'-O-methyl-ribonucleoside) in mRNA + S-adenosyl-L-homocysteine + H(+). Its function is as follows. Plays a role in virus budding by binding to the cell membrane and gathering the viral RNA into a nucleocapsid that forms the core of a mature virus particle. During virus entry, may induce genome penetration into the host cytoplasm after hemifusion induced by the surface proteins. Can migrate to the cell nucleus where it modulates host functions. In terms of biological role, inhibits RNA silencing by interfering with host Dicer. Functionally, prevents premature fusion activity of envelope proteins in trans-Golgi by binding to envelope protein E at pH6.0. After virion release in extracellular space, gets dissociated from E dimers. Acts as a chaperone for envelope protein E during intracellular virion assembly by masking and inactivating envelope protein E fusion peptide. prM is the only viral peptide matured by host furin in the trans-Golgi network probably to avoid catastrophic activation of the viral fusion activity in acidic Golgi compartment prior to virion release. prM-E cleavage is inefficient, and many virions are only partially matured. These uncleaved prM would play a role in immune evasion. Its function is as follows. May play a role in virus budding. Exerts cytotoxic effects by activating a mitochondrial apoptotic pathway through M ectodomain. May display a viroporin activity. In terms of biological role, binds to host cell surface receptor and mediates fusion between viral and cellular membranes. Envelope protein is synthesized in the endoplasmic reticulum in the form of heterodimer with protein prM. They play a role in virion budding in the ER, and the newly formed immature particle is covered with 60 spikes composed of heterodimer between precursor prM and envelope protein E. The virion is transported to the Golgi apparatus where the low pH causes dissociation of PrM-E heterodimers and formation of E homodimers. prM-E cleavage is inefficient, and many virions are only partially matured. These uncleaved prM would play a role in immune evasion. Functionally, involved in immune evasion, pathogenesis and viral replication. Once cleaved off the polyprotein, is targeted to three destinations: the viral replication cycle, the plasma membrane and the extracellular compartment. Essential for viral replication. Required for formation of the replication complex and recruitment of other non-structural proteins to the ER-derived membrane structures. Excreted as a hexameric lipoparticle that plays a role against host immune response. Antagonizing the complement function. Binds to the host macrophages and dendritic cells. Inhibits signal transduction originating from Toll-like receptor 3 (TLR3). Component of the viral RNA replication complex that functions in virion assembly and antagonizes the host immune response. Its function is as follows. Required cofactor for the serine protease function of NS3. May have membrane-destabilizing activity and form viroporins. In terms of biological role, displays three enzymatic activities: serine protease, NTPase and RNA helicase. NS3 serine protease, in association with NS2B, performs its autocleavage and cleaves the polyprotein at dibasic sites in the cytoplasm: C-prM, NS2A-NS2B, NS2B-NS3, NS3-NS4A, NS4A-2K and NS4B-NS5. NS3 RNA helicase binds RNA and unwinds dsRNA in the 3' to 5' direction. Also plays a role in virus assembly. Functionally, regulates the ATPase activity of the NS3 helicase activity. NS4A allows NS3 helicase to conserve energy during unwinding. Functions as a signal peptide for NS4B and is required for the interferon antagonism activity of the latter. Its function is as follows. Induces the formation of ER-derived membrane vesicles where the viral replication takes place. Inhibits interferon (IFN)-induced host STAT1 phosphorylation and nuclear translocation, thereby preventing the establishment of cellular antiviral state by blocking the IFN-alpha/beta pathway. In terms of biological role, replicates the viral (+) and (-) RNA genome, and performs the capping of genomes in the cytoplasm. NS5 methylates viral RNA cap at guanine N-7 and ribose 2'-O positions. Besides its role in RNA genome replication, also prevents the establishment of cellular antiviral state by blocking the interferon-alpha/beta (IFN-alpha/beta) signaling pathway. IFN-I induces binding of NS5 to host IFN-activated transcription factor STAT2, preventing its transcriptional activity. Host TRIM23 is the E3 ligase that interacts with and polyubiquitinates NS5 to promote its binding to STAT2 and trigger IFN-I signaling inhibition. This Yellow fever virus (isolate Ethiopia/Couma/1961) (YFV) protein is Genome polyprotein.